The sequence spans 256 residues: 5'-nucleotidase SurE (256 aa).

A divalent metal cation is bound by residues D9, D10, S40, and N94.

Belongs to the SurE nucleotidase family. Requires a divalent metal cation as cofactor.

The protein localises to the cytoplasm. The catalysed reaction is a ribonucleoside 5'-phosphate + H2O = a ribonucleoside + phosphate. Nucleotidase that shows phosphatase activity on nucleoside 5'-monophosphates. This is 5'-nucleotidase SurE from Campylobacter fetus subsp. fetus (strain 82-40).